A 150-amino-acid polypeptide reads, in one-letter code: UPF0178 protein Bcep1808_1605 (150 aa).

It belongs to the UPF0178 family.

The protein is UPF0178 protein Bcep1808_1605 of Burkholderia vietnamiensis (strain G4 / LMG 22486) (Burkholderia cepacia (strain R1808)).